We begin with the raw amino-acid sequence, 245 residues long: tRNA (guanine-N(1)-)-methyltransferase (245 aa).

S-adenosyl-L-methionine contacts are provided by residues G111 and 131-136 (MGDYVL).

Belongs to the RNA methyltransferase TrmD family. Homodimer.

Its subcellular location is the cytoplasm. The catalysed reaction is guanosine(37) in tRNA + S-adenosyl-L-methionine = N(1)-methylguanosine(37) in tRNA + S-adenosyl-L-homocysteine + H(+). Functionally, specifically methylates guanosine-37 in various tRNAs. The polypeptide is tRNA (guanine-N(1)-)-methyltransferase (Staphylococcus aureus (strain Mu3 / ATCC 700698)).